We begin with the raw amino-acid sequence, 101 residues long: Small ribosomal subunit protein uS14 (101 aa).

The segment covering 1–10 (MAKNSMVERD) has biased composition (basic and acidic residues). The segment at 1 to 20 (MAKNSMVERDRKRRKLAQKY) is disordered.

Belongs to the universal ribosomal protein uS14 family. Part of the 30S ribosomal subunit. Contacts proteins S3 and S10.

In terms of biological role, binds 16S rRNA, required for the assembly of 30S particles and may also be responsible for determining the conformation of the 16S rRNA at the A site. The chain is Small ribosomal subunit protein uS14 from Halorhodospira halophila (strain DSM 244 / SL1) (Ectothiorhodospira halophila (strain DSM 244 / SL1)).